A 368-amino-acid polypeptide reads, in one-letter code: Protein NDRG2 (368 aa).

Residues 330-339 (SLSSSYSMEG) are compositionally biased toward low complexity. A disordered region spans residues 330–368 (SLSSSYSMEGSRSRSRTLSQGSQGGQLPPSPSNTMEVSC).

It belongs to the NDRG family.

The protein localises to the cytoplasm. Contributes to the regulation of the Wnt signaling pathway. Down-regulates CTNNB1-mediated transcriptional activation of target genes. May be involved in neuron differentiation. The polypeptide is Protein NDRG2 (ndrg2) (Danio rerio (Zebrafish)).